The sequence spans 180 residues: Large ribosomal subunit protein uL5 (180 aa).

This sequence belongs to the universal ribosomal protein uL5 family. In terms of assembly, part of the 50S ribosomal subunit; part of the 5S rRNA/L5/L18/L25 subcomplex. Contacts the 5S rRNA and the P site tRNA. Forms a bridge to the 30S subunit in the 70S ribosome.

Functionally, this is one of the proteins that bind and probably mediate the attachment of the 5S RNA into the large ribosomal subunit, where it forms part of the central protuberance. In the 70S ribosome it contacts protein S13 of the 30S subunit (bridge B1b), connecting the 2 subunits; this bridge is implicated in subunit movement. Contacts the P site tRNA; the 5S rRNA and some of its associated proteins might help stabilize positioning of ribosome-bound tRNAs. The chain is Large ribosomal subunit protein uL5 from Streptococcus uberis (strain ATCC BAA-854 / 0140J).